Reading from the N-terminus, the 541-residue chain is MSPSKVYQTPEEKIRAELGLSSGVLTIRRNAPAAVLYEDALAERKTAISSTGALIAYSGEKTGRSPKDKRIVDEPTSSDNIWWGPVNRKASEKTWLINRERAADFLRTREHLYIVDAYAGWDPRYRIKIRIVCCRAYHALFMTNMLIRPTEEELAEFGEPDFTVWNAGQFPANTHTEGMSSKTTVEINFRAMEMVILGTEYAGEMKKGIFTVMFYLMPINHNVLTLHSSANQGPNNDVTLFFGLSGTGKTTLSADQHRKLIGDDEHCWSDYGVFNIEGGCYAKCIGLSGEKEPEIFNAIKYGSVLENVVYDPVTRVVDYEDSSITENTRCAYPIEYIPSAQIPCLSENHPSNIVLLTCDASGVLPPVSRLTPEQVMYHFISGYTSKMAGTEQGVTEPEATFSSCFGQPFLALHPMKYATMLAEKMSQHNASAWLINTGWTGSSYTAGGKRCPLKYTRAILDSIHDGTLAQAEYETLPVFGLSIPKAVEGVPAELLNPAKNWVEGEGKYASAVSALASKFTENFKIYQDQATEEVVRAGPQI.

243-250 serves as a coordination point for ATP; it reads GLSGTGKT.

The protein belongs to the phosphoenolpyruvate carboxykinase (ATP) family.

The catalysed reaction is oxaloacetate + ATP = phosphoenolpyruvate + ADP + CO2. Its pathway is carbohydrate biosynthesis; gluconeogenesis. This is Phosphoenolpyruvate carboxykinase (ATP) (PCK1) from Eremothecium gossypii (strain ATCC 10895 / CBS 109.51 / FGSC 9923 / NRRL Y-1056) (Yeast).